The chain runs to 388 residues: Succinate--CoA ligase [ADP-forming] subunit beta (388 aa).

The ATP-grasp domain maps to 9 to 244 (KQLFAEFGLP…PSQEDKREAH (236 aa)). ATP is bound by residues Lys-46, 53–55 (GRG), Glu-99, Ser-102, and Glu-107. Residues Asn-199 and Asp-213 each coordinate Mg(2+). Substrate is bound by residues Asn-264 and 321–323 (GIV).

Belongs to the succinate/malate CoA ligase beta subunit family. In terms of assembly, heterotetramer of two alpha and two beta subunits. Requires Mg(2+) as cofactor.

It catalyses the reaction succinate + ATP + CoA = succinyl-CoA + ADP + phosphate. It carries out the reaction GTP + succinate + CoA = succinyl-CoA + GDP + phosphate. It participates in carbohydrate metabolism; tricarboxylic acid cycle; succinate from succinyl-CoA (ligase route): step 1/1. Succinyl-CoA synthetase functions in the citric acid cycle (TCA), coupling the hydrolysis of succinyl-CoA to the synthesis of either ATP or GTP and thus represents the only step of substrate-level phosphorylation in the TCA. The beta subunit provides nucleotide specificity of the enzyme and binds the substrate succinate, while the binding sites for coenzyme A and phosphate are found in the alpha subunit. The chain is Succinate--CoA ligase [ADP-forming] subunit beta from Vibrio vulnificus (strain YJ016).